Here is a 180-residue protein sequence, read N- to C-terminus: uncharacterized protein (180 aa).

The protein belongs to the isochorismatase family.

This is an uncharacterized protein from Bacillus subtilis (strain 168).